Here is a 254-residue protein sequence, read N- to C-terminus: Ubiquinone biosynthesis O-methyltransferase (254 aa).

S-adenosyl-L-methionine is bound by residues Arg-47, Gly-78, Asp-99, and Met-141.

This sequence belongs to the methyltransferase superfamily. UbiG/COQ3 family.

It carries out the reaction a 3-demethylubiquinol + S-adenosyl-L-methionine = a ubiquinol + S-adenosyl-L-homocysteine + H(+). The enzyme catalyses a 3-(all-trans-polyprenyl)benzene-1,2-diol + S-adenosyl-L-methionine = a 2-methoxy-6-(all-trans-polyprenyl)phenol + S-adenosyl-L-homocysteine + H(+). It functions in the pathway cofactor biosynthesis; ubiquinone biosynthesis. Its function is as follows. O-methyltransferase that catalyzes the 2 O-methylation steps in the ubiquinone biosynthetic pathway. In Rhodopseudomonas palustris (strain BisB18), this protein is Ubiquinone biosynthesis O-methyltransferase.